We begin with the raw amino-acid sequence, 858 residues long: MAYHPAYTETMSMGGGSSHGGGQQYVPFATSSGSLRVELLHGNLDIWVKEAKHLPNMDGFHNRLGGMLSGLGRKKVEGEKSSKITSDPYVTVSISGAVIGRTFVISNSENPVWMQHFDVPVAHSAAEVHFVVKDSDIIGSQIMGAVGIPTEQLCSGNRIEGLFPILNSSGKPCKQGAVLGLSIQYTPMERMRLYQMGVGSGNECVGVPGTYFPLRKGGRVTLYQDAHVDDGTLPSVHLDGGIQYRHGKCWEDMADAIRQARRLIYITGWSVFHPVRLVRRTNDPTEGTLGELLKVKSQEGVRVLVLVWDDPTSRSLLGFKTQGVMNTSDEETRRFFKHSSVQVLLCPRSGGKGHSFIKKSEVGTIYTHHQKTVIVDAEAAQNRRKIVAFVGGLDLCNGRFDTPKHPLFRTLKTLHKDDFHNPNFVTTADDGPREPWHDLHSKIDGPAAYDVLANFEERWMKASKPRGIGKLKSSSDDSLLRIDRIPDIVGLSEASSANDNDPESWHVQVFRSIDSSSVKGFPKDPKEATGRNLLCGKNILIDMSIHAAYVKAIRSAQHFIYIENQYFLGSSFNWDSNKDLGANNLIPMEIALKIANKIRAREKFAAYIVIPMWPEGAPTSNPIQRILYWQHKTMQMMYQTIYKALVEVGLDSQFEPQDFLNFFCLGTREVPVGTVSVYNSPRKPPQPNANANAAQVQALKSRRFMIYVHSKGMVVDDEFVLIGSANINQRSLEGTRDTEIAMGGYQPHYSWAMKGSRPHGQIFGYRMSLWAEHLGFLEQGFEEPENMECVRRVRQLSELNWRQYAAEEVTEMSGHLLKYPVQVDRTGKVSSLPGCETFPDLGGKIIGSFLALQENLTI.

Positions 27–163 (PFATSSGSLR…CSGNRIEGLF (137 aa)) constitute a C2 domain. Ca(2+) is bound at residue Asp-225. A PLD phosphodiesterase 1 domain is found at 364-399 (TIYTHHQKTVIVDAEAAQNRRKIVAFVGGLDLCNGR). Residues His-369, Lys-371, and Asp-376 contribute to the active site. His-369 contributes to the a 1,2-diacyl-sn-glycero-3-phosphate binding site. Residues His-405 and His-437 each coordinate Ca(2+). Residue Gln-565 participates in a 1,2-diacyl-sn-glycero-3-phosphate binding. Position 680 is a phosphoserine (Ser-680). Residues 704–731 (FMIYVHSKGMVVDDEFVLIGSANINQRS) enclose the PLD phosphodiesterase 2 domain. Residues His-709, Lys-711, and Asp-716 contribute to the active site. His-709 is a binding site for a 1,2-diacyl-sn-glycero-3-phosphate. A Ca(2+)-binding site is contributed by Glu-772.

The protein belongs to the phospholipase D family. C2-PLD subfamily. Requires Ca(2+) as cofactor. In terms of tissue distribution, highly expressed in roots and flowers, moderately in stems, leaves and seedlings and low in siliques. Not detected in seeds.

It localises to the cytoplasm. The protein localises to the membrane. It carries out the reaction a 1,2-diacyl-sn-glycero-3-phosphocholine + H2O = a 1,2-diacyl-sn-glycero-3-phosphate + choline + H(+). Inhibited by neomycin. Up-regulated by PIP2 binding. In terms of biological role, hydrolyzes glycerol-phospholipids at the terminal phosphodiesteric bond to generate phosphatidic acids (PA). Plays an important role in various cellular processes, including phytohormone action, vesicular trafficking, secretion, cytoskeletal arrangement, meiosis, tumor promotion, pathogenesis, membrane deterioration and senescence. Can use phosphatidylserine (PS) and phosphatidylethanolamine (PE) as substrates only in the presence of PIP2. Can use phosphatidylcholine (PC), phosphatidylglycerol (PG) or N-acylphosphatidylethanolamine (NAPE) as substrates in the presence of PE and PIP2. Involved in membrane lipid modulation under aluminum (Al) stress and negatively modulate plant tolerance to Al. The polypeptide is Phospholipase D gamma 1 (Arabidopsis thaliana (Mouse-ear cress)).